Consider the following 170-residue polypeptide: MFYPVVQILIGIILVIILILGFYHLKRKPPKKKCKTDTDCKDKGHHCVRGACTDKSCLEAVKQDIKDIKLDPTIRSCDYAPGFYRFNATTADLQSPFGKTRIDLGKVWTTWSKEDEYCQSLCLQHKGSIGWEFDEMSLRGEGNCYCYTNSHPALKNSNNTTVMGIARNVL.

Residue Met1 is a topological domain, intravirion. A helical membrane pass occupies residues 2–22 (FYPVVQILIGIILVIILILGF). Residues 23 to 170 (YHLKRKPPKK…TVMGIARNVL (148 aa)) lie on the Virion surface side of the membrane.

The protein belongs to the asfivirus envelope protein p22 family.

Its subcellular location is the virion membrane. The protein resides in the host cell membrane. The protein is Envelope protein 168 of African swine fever virus (isolate Tick/South Africa/Pretoriuskop Pr4/1996) (ASFV).